The primary structure comprises 225 residues: Orotate phosphoribosyltransferase (225 aa).

Residues arginine 107, lysine 108, lysine 111, and 133–141 contribute to the 5-phospho-alpha-D-ribose 1-diphosphate site; that span reads EDLTTDGGS. An orotate-binding site is contributed by threonine 137.

Belongs to the purine/pyrimidine phosphoribosyltransferase family. PyrE subfamily. As to quaternary structure, homodimer. Mg(2+) is required as a cofactor.

It catalyses the reaction orotidine 5'-phosphate + diphosphate = orotate + 5-phospho-alpha-D-ribose 1-diphosphate. It functions in the pathway pyrimidine metabolism; UMP biosynthesis via de novo pathway; UMP from orotate: step 1/2. Catalyzes the transfer of a ribosyl phosphate group from 5-phosphoribose 1-diphosphate to orotate, leading to the formation of orotidine monophosphate (OMP). The chain is Orotate phosphoribosyltransferase from Roseobacter denitrificans (strain ATCC 33942 / OCh 114) (Erythrobacter sp. (strain OCh 114)).